Consider the following 1685-residue polypeptide: Collagen alpha-5(IV) chain (1685 aa).

The N-terminal stretch at 1-26 (MKLRGVSLAAGLFLLALSLWGQPAEA) is a signal peptide. Residues 27 to 41 (AACYGCSPGSKCDCS) form a nonhelical region (NC2) region. The segment at 42–1456 (GIKGEKGERG…QGPPGPPGTS (1415 aa)) is triple-helical region. The segment at 49–1459 (ERGFPGLEGH…PGPPGTSSVA (1411 aa)) is disordered. A compositionally biased stretch (low complexity) spans 52–61 (FPGLEGHPGL). The span at 62–73 (PGFPGPEGPPGP) shows a compositional bias: pro residues. A glycan (N-linked (GlcNAc...) asparagine) is linked at asparagine 125. Pro residues predominate over residues 188–212 (TGIPGPIGPPGPPGLMGPPGPPGLP). The span at 214–225 (PKGNMGLNFQGP) shows a compositional bias: low complexity. A compositionally biased stretch (basic and acidic residues) spans 246–257 (EQKRPIDVEFQK). Positions 266–281 (RGPPGPPGIRGPPGPP) are enriched in pro residues. Basic and acidic residues-rich tracts occupy residues 284 to 305 (EKGEKGEQGEPGKRGKPGKDGE) and 324 to 333 (PGRDGEKGQK). Low complexity predominate over residues 413-430 (PPGISIPGPPGLDGQPGA). Pro residues-rich tracts occupy residues 431–445 (PGLPGPPGPAGPHIP), 493–505 (PGQPGLPGLPGPP), 620–630 (MGPPGFGPPGP), and 709–727 (PGPPGPKGFPGIPGPPGAP). A compositionally biased stretch (low complexity) spans 788–797 (RTGLDGLPGP). Composition is skewed to pro residues over residues 848-859 (PGPPGLDVPGPP) and 868-880 (PGAPGPIGPPGSP). Composition is skewed to low complexity over residues 882-901 (LPGKAGASGFPGTKGEMGMM), 912-931 (IPGRSGVPGLKGDDGLQGQP), 983-999 (YQGLPGDPGQPGLSGQP), 1010-1026 (NPGLPGQPGLIGPPGLK), and 1111-1120 (TPGAKGQPGL). Positions 1139–1148 (PGNPGLPGEP) are enriched in pro residues. Composition is skewed to gly residues over residues 1149–1158 (GPVGGGGHPG) and 1202–1211 (GQKGDGGLPG). Composition is skewed to pro residues over residues 1234-1243 (QGPPGPPGSP) and 1256-1274 (PQGPPGRPGLPGPEGPPGL). Residues 1295–1308 (LPGLKGDQGPPGLQ) are compositionally biased toward low complexity. The span at 1353 to 1362 (IGPPGPPGLP) shows a compositional bias: pro residues. In terms of domain architecture, Collagen IV NC1 spans 1461–1685 (GFLITRHSQT…SRCQVCMKRT (225 aa)). Intrachain disulfides connect cysteine 1476–cysteine 1567, cysteine 1509–cysteine 1564, cysteine 1521–cysteine 1527, cysteine 1586–cysteine 1681, cysteine 1620–cysteine 1678, and cysteine 1632–cysteine 1638. Residue methionine 1549 forms an S-Lysyl-methionine sulfilimine (Met-Lys) (interchain with K-1667) linkage. Lysine 1667 participates in a covalent cross-link: S-Lysyl-methionine sulfilimine (Lys-Met) (interchain with M-1549).

This sequence belongs to the type IV collagen family. As to quaternary structure, there are six type IV collagen isoforms, alpha 1(IV)-alpha 6(IV), each of which can form a triple helix structure with 2 other chains to generate type IV collagen network. In terms of processing, prolines at the third position of the tripeptide repeating unit (G-X-Y) are hydroxylated in some or all of the chains. Type IV collagens contain numerous cysteine residues which are involved in inter- and intramolecular disulfide bonding. 12 of these, located in the NC1 domain, are conserved in all known type IV collagens. Post-translationally, the trimeric structure of the NC1 domains is stabilized by covalent bonds between Lys and Met residues. As to expression, isoform 2 is found in kidney.

The protein localises to the secreted. It localises to the extracellular space. Its subcellular location is the extracellular matrix. It is found in the basement membrane. Type IV collagen is the major structural component of glomerular basement membranes (GBM), forming a 'chicken-wire' meshwork together with laminins, proteoglycans and entactin/nidogen. The polypeptide is Collagen alpha-5(IV) chain (COL4A5) (Homo sapiens (Human)).